Consider the following 219-residue polypeptide: KP6 killer toxin (219 aa).

An N-terminal signal peptide occupies residues 1–19 (MLIFSVLMYLGLLLAGASA). Positions 20–27 (LPNGLSPR) are excised as a propeptide. 4 cysteine pairs are disulfide-bonded: Cys-32–Cys-39, Cys-43–Cys-101, Cys-45–Cys-92, and Cys-62–Cys-78. A glycan (N-linked (GlcNAc...) asparagine; by host) is linked at Asn-98. Residues 106 to 138 (KRTIQDSATDTVDLGAELHRDDPPPTASDIGKR) constitute a propeptide that is removed on maturation. Residues 120–142 (GAELHRDDPPPTASDIGKRGKRP) form a disordered region.

Heterodimer of two small polypeptides that are not covalently linked.

The protein localises to the secreted. Functionally, this protein is lethal to sensitive cells of the same or related species. The KP6 alpha subunit is known to recognize some cellular receptors before interaction of the complex with KP6 beta, precipitating cell death. The polypeptide is KP6 killer toxin (Ustilago maydis P6 virus (UmV6)).